The following is a 273-amino-acid chain: WIMGHMVNAIAQIDEFVNLGANSIETDVSFDSSANPEYTYHGVPCDCGRTCTKWEHFNEFLKGLRKATTPGDSKYHEKLVLVVFDLKTGSLYDNQASDAGKKLAKSLLQNYWNNGNNGGRAYIVLSIPNLAHYKLIAGFKEALTSEGHPELMDKVGYDFSGNDDIGDVANAYKKAGVTGHVWQSDGITNCLLRGLDRVRKAVANRDSSNGYINKVYYWTVDKRQSTRDALDAGVDGIMTNYPDVVADVLNESAYKAKFRIASYDDNPWETFKN.

Residue histidine 5 is part of the active site. Mg(2+) is bound by residues glutamate 25 and aspartate 27. Histidine 41 serves as the catalytic Nucleophile. 2 disulfide bridges follow: cysteine 45-cysteine 51 and cysteine 47-cysteine 190. A Mg(2+)-binding site is contributed by aspartate 85. Residue asparagine 250 is glycosylated (N-linked (GlcNAc...) asparagine).

It belongs to the arthropod phospholipase D family. Class II subfamily. Mg(2+) is required as a cofactor. Expressed by the venom gland.

Its subcellular location is the secreted. The enzyme catalyses an N-(acyl)-sphingosylphosphocholine = an N-(acyl)-sphingosyl-1,3-cyclic phosphate + choline. It catalyses the reaction an N-(acyl)-sphingosylphosphoethanolamine = an N-(acyl)-sphingosyl-1,3-cyclic phosphate + ethanolamine. The catalysed reaction is a 1-acyl-sn-glycero-3-phosphocholine = a 1-acyl-sn-glycero-2,3-cyclic phosphate + choline. It carries out the reaction a 1-acyl-sn-glycero-3-phosphoethanolamine = a 1-acyl-sn-glycero-2,3-cyclic phosphate + ethanolamine. Functionally, dermonecrotic toxins cleave the phosphodiester linkage between the phosphate and headgroup of certain phospholipids (sphingolipid and lysolipid substrates), forming an alcohol (often choline) and a cyclic phosphate. This toxin acts on sphingomyelin (SM). It may also act on ceramide phosphoethanolamine (CPE), lysophosphatidylcholine (LPC) and lysophosphatidylethanolamine (LPE), but not on lysophosphatidylserine (LPS), and lysophosphatidylglycerol (LPG). It acts by transphosphatidylation, releasing exclusively cyclic phosphate products as second products. Induces dermonecrosis, hemolysis, increased vascular permeability, edema, inflammatory response, and platelet aggregation. This is Dermonecrotic toxin LarSicTox-alphaIB1aii from Loxosceles arizonica (Arizona brown spider).